A 39-amino-acid polypeptide reads, in one-letter code: MKVLDDWFSRKFSKAVHGNNHGTISLSTLSYIRVHKLVK.

This is an uncharacterized protein from Saccharomyces cerevisiae (strain ATCC 204508 / S288c) (Baker's yeast).